Reading from the N-terminus, the 85-residue chain is ATP synthase subunit c (85 aa).

2 helical membrane passes run 10-30 and 53-73; these read IAVSIMIGLAALGTALGFGIL and FIVAGLIDAIAMIGVAVALLF.

This sequence belongs to the ATPase C chain family. In terms of assembly, F-type ATPases have 2 components, F(1) - the catalytic core - and F(0) - the membrane proton channel. F(1) has five subunits: alpha(3), beta(3), gamma(1), delta(1), epsilon(1). F(0) has three main subunits: a(1), b(2) and c(10-14). The alpha and beta chains form an alternating ring which encloses part of the gamma chain. F(1) is attached to F(0) by a central stalk formed by the gamma and epsilon chains, while a peripheral stalk is formed by the delta and b chains.

It localises to the cell inner membrane. F(1)F(0) ATP synthase produces ATP from ADP in the presence of a proton or sodium gradient. F-type ATPases consist of two structural domains, F(1) containing the extramembraneous catalytic core and F(0) containing the membrane proton channel, linked together by a central stalk and a peripheral stalk. During catalysis, ATP synthesis in the catalytic domain of F(1) is coupled via a rotary mechanism of the central stalk subunits to proton translocation. In terms of biological role, key component of the F(0) channel; it plays a direct role in translocation across the membrane. A homomeric c-ring of between 10-14 subunits forms the central stalk rotor element with the F(1) delta and epsilon subunits. The polypeptide is ATP synthase subunit c (Idiomarina loihiensis (strain ATCC BAA-735 / DSM 15497 / L2-TR)).